The following is a 201-amino-acid chain: Oligoribonuclease (201 aa).

The Exonuclease domain maps to 5-169 (MVWIDCEMTG…ADIRDSITEL (165 aa)). Tyr126 is an active-site residue.

The protein belongs to the oligoribonuclease family.

The protein resides in the cytoplasm. Functionally, 3'-to-5' exoribonuclease specific for small oligoribonucleotides. The sequence is that of Oligoribonuclease from Streptomyces griseus.